Here is a 483-residue protein sequence, read N- to C-terminus: Glutamyl-tRNA(Gln) amidotransferase subunit A (483 aa).

Catalysis depends on charge relay system residues K77 and S152. S176 serves as the catalytic Acyl-ester intermediate.

Belongs to the amidase family. GatA subfamily. As to quaternary structure, heterotrimer of A, B and C subunits.

The catalysed reaction is L-glutamyl-tRNA(Gln) + L-glutamine + ATP + H2O = L-glutaminyl-tRNA(Gln) + L-glutamate + ADP + phosphate + H(+). Its function is as follows. Allows the formation of correctly charged Gln-tRNA(Gln) through the transamidation of misacylated Glu-tRNA(Gln) in organisms which lack glutaminyl-tRNA synthetase. The reaction takes place in the presence of glutamine and ATP through an activated gamma-phospho-Glu-tRNA(Gln). In Listeria monocytogenes serotype 4b (strain CLIP80459), this protein is Glutamyl-tRNA(Gln) amidotransferase subunit A.